Reading from the N-terminus, the 228-residue chain is Death domain-containing membrane protein NRADD (228 aa).

Residues 1 to 52 are Extracellular-facing; that stretch reads MLYNVSKGVVYSDTALQGQDGDREGMWVGAGGALAPNTSSLFPPEPPGASSN. Asn-4 and Asn-37 each carry an N-linked (GlcNAc...) asparagine glycan. The helical; Signal-anchor for type III membrane protein transmembrane segment at 53–73 threads the bilayer; sequence IIPVYCALLATVILGLLAYVA. The Cytoplasmic segment spans residues 74-228; it reads FKCWRSHKQR…SSPAESSSVV (155 aa). Residues 87–122 form a disordered region; it reads AKARTVELGDPDRDQRRGDSNVFVDSPPSLEPCIPS. The segment covering 90–105 has biased composition (basic and acidic residues); it reads RTVELGDPDRDQRRGD. Residues 143-222 form the Death domain; that stretch reads EEVQRLLMMG…DVVQVLSSPA (80 aa).

Interacts with NGFR. Interacts with NTRK1. Interacts with SORT1. Detected in lung and testis.

The protein localises to the cell membrane. The protein resides in the nucleus. Functionally, modulates NTRK1 signaling. Can activate several intracellular signaling pathways, leading to activation of JUN. Promotes apoptosis. Promotes translocation of SORT1 to the cell membrane, and thereby hinders lysosomal degradation of SOTR1 and promotes its interaction with NGFR. The protein is Death domain-containing membrane protein NRADD (Nradd) of Mus musculus (Mouse).